The following is a 340-amino-acid chain: Replication factor C subunit 2 (340 aa).

59 to 66 (GSPGTGKT) contacts ATP.

It belongs to the activator 1 small subunits family. Heteropentamer of subunits rfc1, rfc2, rfc3, rfc4 and rfc5 that forms a complex (RFC) with PCNA in the presence of ATP. Two other complexes exist where rfc1 can be replaced by either ctf18 or elg1 to form the ctf18-RFC or the elg1-RFC complexes respectively.

The protein resides in the nucleus. Its function is as follows. The elongation of primed DNA templates by DNA polymerase delta and epsilon requires the action of the accessory proteins PCNA and activator 1. Subunit 2 binds ATP and single-stranded DNA. The polypeptide is Replication factor C subunit 2 (rfc2) (Schizosaccharomyces pombe (strain 972 / ATCC 24843) (Fission yeast)).